Consider the following 353-residue polypeptide: Photosystem II protein D1 (353 aa).

Position 2 is an N-acetylthreonine (T2). Phosphothreonine is present on T2. A run of 3 helical transmembrane segments spans residues 29–46, 118–133, and 142–156; these read NIGWFGVLMIPTLLTATS, HFLLGVACYMGREWEL, and WIAVAYSAPVAAATA. Position 118 (H118) interacts with chlorophyll a. Y126 is a pheophytin a binding site. The [CaMn4O5] cluster site is built by D170 and E189. Residues 197 to 218 traverse the membrane as a helical segment; sequence FHMLGVAGVFGGSLFSAMHGSL. Residue H198 participates in chlorophyll a binding. A quinone is bound by residues H215 and 264-265; that span reads SF. H215 contacts Fe cation. Position 272 (H272) interacts with Fe cation. Residues 274–288 traverse the membrane as a helical segment; the sequence is FLAAWPVVGIWFTAL. Residues H332, E333, D342, and A344 each contribute to the [CaMn4O5] cluster site. Positions 345 to 353 are excised as a propeptide; sequence AVEAPAVNG.

This sequence belongs to the reaction center PufL/M/PsbA/D family. In terms of assembly, PSII is composed of 1 copy each of membrane proteins PsbA, PsbB, PsbC, PsbD, PsbE, PsbF, PsbH, PsbI, PsbJ, PsbK, PsbL, PsbM, PsbT, PsbX, PsbY, PsbZ, Psb30/Ycf12, at least 3 peripheral proteins of the oxygen-evolving complex and a large number of cofactors. It forms dimeric complexes. Requires The D1/D2 heterodimer binds P680, chlorophylls that are the primary electron donor of PSII, and subsequent electron acceptors. It shares a non-heme iron and each subunit binds pheophytin, quinone, additional chlorophylls, carotenoids and lipids. D1 provides most of the ligands for the Mn4-Ca-O5 cluster of the oxygen-evolving complex (OEC). There is also a Cl(-1) ion associated with D1 and D2, which is required for oxygen evolution. The PSII complex binds additional chlorophylls, carotenoids and specific lipids. as cofactor. Tyr-161 forms a radical intermediate that is referred to as redox-active TyrZ, YZ or Y-Z. In terms of processing, C-terminally processed by CTPA; processing is essential to allow assembly of the oxygen-evolving complex and thus photosynthetic growth.

Its subcellular location is the plastid. It localises to the chloroplast thylakoid membrane. It catalyses the reaction 2 a plastoquinone + 4 hnu + 2 H2O = 2 a plastoquinol + O2. Photosystem II (PSII) is a light-driven water:plastoquinone oxidoreductase that uses light energy to abstract electrons from H(2)O, generating O(2) and a proton gradient subsequently used for ATP formation. It consists of a core antenna complex that captures photons, and an electron transfer chain that converts photonic excitation into a charge separation. The D1/D2 (PsbA/PsbD) reaction center heterodimer binds P680, the primary electron donor of PSII as well as several subsequent electron acceptors. This is Photosystem II protein D1 from Dumortiera hirsuta (Liverwort).